Reading from the N-terminus, the 168-residue chain is Disulfide bond formation protein B 2 (168 aa).

Residues 1-9 lie on the Cytoplasmic side of the membrane; the sequence is MSLACLRSF. The chain crosses the membrane as a helical span at residues 10–26; the sequence is FLPALLASTAVLVASFH. The Periplasmic segment spans residues 27–44; that stretch reads LESVVGLVPCALCFSQRL. Cys-36 and Cys-39 are disulfide-bonded. Residues 45-61 form a helical membrane-spanning segment; sequence MLGVYALVCLAALVHSP. At 62-67 the chain is on the cytoplasmic side; it reads AARGRR. Residues 68–85 traverse the membrane as a helical segment; the sequence is AYAGLALASAFGGALLAG. Over 86-140 the chain is Periplasmic; the sequence is RHVWLQGDPQVVDGCHLPVEQVLQRPLGEILQMFLLGSPDCVSISWSFLDLTLPE. A disulfide bridge connects residues Cys-100 and Cys-126. A helical transmembrane segment spans residues 141–159; it reads WSLLAFLLLAAMPLSWLVA. The Cytoplasmic segment spans residues 160–168; sequence YRFRKRAMA.

The protein belongs to the DsbB family.

The protein resides in the cell inner membrane. Its function is as follows. Required for disulfide bond formation in some periplasmic proteins. Acts by oxidizing the DsbA protein. The chain is Disulfide bond formation protein B 2 from Pseudomonas entomophila (strain L48).